Here is a 190-residue protein sequence, read N- to C-terminus: GTP cyclohydrolase 1 (190 aa).

Zn(2+) contacts are provided by Cys80, His83, and Cys151.

Belongs to the GTP cyclohydrolase I family. As to quaternary structure, toroid-shaped homodecamer, composed of two pentamers of five dimers.

The catalysed reaction is GTP + H2O = 7,8-dihydroneopterin 3'-triphosphate + formate + H(+). The protein operates within cofactor biosynthesis; 7,8-dihydroneopterin triphosphate biosynthesis; 7,8-dihydroneopterin triphosphate from GTP: step 1/1. The sequence is that of GTP cyclohydrolase 1 from Rickettsia akari (strain Hartford).